Consider the following 477-residue polypeptide: Ribulose bisphosphate carboxylase large chain (477 aa).

Positions 1 to 2 are excised as a propeptide; sequence MS. At Pro-3 the chain carries N-acetylproline. Lys-14 carries the N6,N6,N6-trimethyllysine modification. Substrate contacts are provided by Asn-123 and Thr-173. Lys-175 serves as the catalytic Proton acceptor. Lys-177 is a binding site for substrate. Residues Lys-201, Asp-203, and Glu-204 each coordinate Mg(2+). Lys-201 is subject to N6-carboxylysine. His-294 acts as the Proton acceptor in catalysis. Positions 295, 327, and 379 each coordinate substrate.

The protein belongs to the RuBisCO large chain family. Type I subfamily. As to quaternary structure, heterohexadecamer of 8 large chains and 8 small chains; disulfide-linked. The disulfide link is formed within the large subunit homodimers. The cofactor is Mg(2+). Post-translationally, the disulfide bond which can form in the large chain dimeric partners within the hexadecamer appears to be associated with oxidative stress and protein turnover.

The protein resides in the plastid. Its subcellular location is the chloroplast. It catalyses the reaction 2 (2R)-3-phosphoglycerate + 2 H(+) = D-ribulose 1,5-bisphosphate + CO2 + H2O. The catalysed reaction is D-ribulose 1,5-bisphosphate + O2 = 2-phosphoglycolate + (2R)-3-phosphoglycerate + 2 H(+). Functionally, ruBisCO catalyzes two reactions: the carboxylation of D-ribulose 1,5-bisphosphate, the primary event in carbon dioxide fixation, as well as the oxidative fragmentation of the pentose substrate in the photorespiration process. Both reactions occur simultaneously and in competition at the same active site. In Nicotiana acuminata (Acuminate tobacco), this protein is Ribulose bisphosphate carboxylase large chain.